The chain runs to 346 residues: Quinolinate synthase (346 aa).

Iminosuccinate-binding residues include histidine 47 and serine 68. Position 113 (cysteine 113) interacts with [4Fe-4S] cluster. Iminosuccinate contacts are provided by residues 139–141 and serine 156; that span reads YAN. Cysteine 200 contacts [4Fe-4S] cluster. Residues 226 to 228 and threonine 243 contribute to the iminosuccinate site; that span reads HPE. [4Fe-4S] cluster is bound at residue cysteine 297.

This sequence belongs to the quinolinate synthase family. Type 1 subfamily. Requires [4Fe-4S] cluster as cofactor.

Its subcellular location is the cytoplasm. The enzyme catalyses iminosuccinate + dihydroxyacetone phosphate = quinolinate + phosphate + 2 H2O + H(+). The protein operates within cofactor biosynthesis; NAD(+) biosynthesis; quinolinate from iminoaspartate: step 1/1. In terms of biological role, catalyzes the condensation of iminoaspartate with dihydroxyacetone phosphate to form quinolinate. This chain is Quinolinate synthase, found in Pseudoalteromonas translucida (strain TAC 125).